A 275-amino-acid chain; its full sequence is Probable endonuclease 4 (275 aa).

Residues His-66, His-106, Glu-140, Asp-172, His-175, His-209, Asp-222, His-224, and Glu-254 each coordinate Zn(2+).

Belongs to the AP endonuclease 2 family. The cofactor is Zn(2+).

It carries out the reaction Endonucleolytic cleavage to 5'-phosphooligonucleotide end-products.. Functionally, endonuclease IV plays a role in DNA repair. It cleaves phosphodiester bonds at apurinic or apyrimidinic (AP) sites, generating a 3'-hydroxyl group and a 5'-terminal sugar phosphate. The polypeptide is Probable endonuclease 4 (Halobacterium salinarum (strain ATCC 29341 / DSM 671 / R1)).